Consider the following 332-residue polypeptide: tRNA (cytosine(38)-C(5))-methyltransferase (332 aa).

The SAM-dependent MTase C5-type domain occupies 3-332; the sequence is HKILELYSGI…ISELLKILFE (330 aa). Residues 12–14, 33–34, 55–56, and Ser75 each bind S-adenosyl-L-homocysteine; these read IGG, DI, and NI. Cys78 is a catalytic residue. Residues Gln79, Ser97, and 316 to 317 contribute to the S-adenosyl-L-homocysteine site; that span reads NS.

This sequence belongs to the class I-like SAM-binding methyltransferase superfamily. C5-methyltransferase family.

The protein resides in the cytoplasm. It is found in the nucleus. It carries out the reaction cytidine(38) in tRNA + S-adenosyl-L-methionine = 5-methylcytidine(38) in tRNA + S-adenosyl-L-homocysteine + H(+). The enzyme catalyses a 2'-deoxycytidine in DNA + S-adenosyl-L-methionine = a 5-methyl-2'-deoxycytidine in DNA + S-adenosyl-L-homocysteine + H(+). Its function is as follows. Specifically methylates cytosine 38 in the anticodon loop of tRNA(Asp). Also has DNA (cytosine-5)-methyltransferase activity. Shows affinity for both tRNA(Asp) and DNA substrates. The sequence is that of tRNA (cytosine(38)-C(5))-methyltransferase from Spodoptera frugiperda (Fall armyworm).